The primary structure comprises 95 residues: Large ribosomal subunit protein eL37x (95 aa).

Residues Cys-19, Cys-22, Cys-34, and Cys-37 each contribute to the Zn(2+) site. A C4-type zinc finger spans residues 19-37; that stretch reads CVRCGRRSFHIQKSRCSAC. The interval 73–95 is disordered; that stretch reads RFKTGFREGTEAKPRSKASASSA. Positions 77–86 are enriched in basic and acidic residues; that stretch reads GFREGTEAKP.

This sequence belongs to the eukaryotic ribosomal protein eL37 family. It depends on Zn(2+) as a cofactor.

Binds to the 23S rRNA. The sequence is that of Large ribosomal subunit protein eL37x (RPL37C) from Arabidopsis thaliana (Mouse-ear cress).